Here is a 206-residue protein sequence, read N- to C-terminus: Proteasome subunit beta 1 (206 aa).

A propeptide spans 1 to 14 (removed in mature form; by autocatalysis); that stretch reads MSRIHNDPKVLLTG. Thr15 functions as the Nucleophile in the catalytic mechanism.

The protein belongs to the peptidase T1B family. As to quaternary structure, the 20S proteasome core is composed of 14 alpha and 14 beta subunits that assemble into four stacked heptameric rings, resulting in a barrel-shaped structure. The two inner rings, each composed of seven catalytic beta subunits, are sandwiched by two outer rings, each composed of seven alpha subunits. The catalytic chamber with the active sites is on the inside of the barrel. Has a gated structure, the ends of the cylinder being occluded by the N-termini of the alpha-subunits. Is capped at one or both ends by the proteasome regulatory ATPase, PAN.

The protein localises to the cytoplasm. The enzyme catalyses Cleavage of peptide bonds with very broad specificity.. With respect to regulation, the formation of the proteasomal ATPase PAN-20S proteasome complex, via the docking of the C-termini of PAN into the intersubunit pockets in the alpha-rings, triggers opening of the gate for substrate entry. Interconversion between the open-gate and close-gate conformations leads to a dynamic regulation of the 20S proteasome proteolysis activity. Its function is as follows. Component of the proteasome core, a large protease complex with broad specificity involved in protein degradation. This Caldivirga maquilingensis (strain ATCC 700844 / DSM 13496 / JCM 10307 / IC-167) protein is Proteasome subunit beta 1.